Here is a 226-residue protein sequence, read N- to C-terminus: Leucyl/phenylalanyl-tRNA--protein transferase (226 aa).

The protein belongs to the L/F-transferase family.

It localises to the cytoplasm. It carries out the reaction N-terminal L-lysyl-[protein] + L-leucyl-tRNA(Leu) = N-terminal L-leucyl-L-lysyl-[protein] + tRNA(Leu) + H(+). It catalyses the reaction N-terminal L-arginyl-[protein] + L-leucyl-tRNA(Leu) = N-terminal L-leucyl-L-arginyl-[protein] + tRNA(Leu) + H(+). The enzyme catalyses L-phenylalanyl-tRNA(Phe) + an N-terminal L-alpha-aminoacyl-[protein] = an N-terminal L-phenylalanyl-L-alpha-aminoacyl-[protein] + tRNA(Phe). Functionally, functions in the N-end rule pathway of protein degradation where it conjugates Leu, Phe and, less efficiently, Met from aminoacyl-tRNAs to the N-termini of proteins containing an N-terminal arginine or lysine. The sequence is that of Leucyl/phenylalanyl-tRNA--protein transferase from Pseudomonas paraeruginosa (strain DSM 24068 / PA7) (Pseudomonas aeruginosa (strain PA7)).